A 179-amino-acid chain; its full sequence is MSRIGKMPIAIGNEAKIEVKGGIITVTGPKGVLDQPMVEEVRIVEEDGKVLVQRINDSKRARAMHGLYRMLVSNMIQGVTTGFTRKLEIAGVGFRAEMKSDLLALTLGYSHMIYFKAPEGIKMETPDQVTVLISGIDKALVGQVAAKIRSFRKPEPYRGKGIKYEGEIIRRKEGKAAGK.

This sequence belongs to the universal ribosomal protein uL6 family. Part of the 50S ribosomal subunit.

This protein binds to the 23S rRNA, and is important in its secondary structure. It is located near the subunit interface in the base of the L7/L12 stalk, and near the tRNA binding site of the peptidyltransferase center. The chain is Large ribosomal subunit protein uL6 from Chlorobium luteolum (strain DSM 273 / BCRC 81028 / 2530) (Pelodictyon luteolum).